We begin with the raw amino-acid sequence, 295 residues long: Fatty acid desaturase 4-like 1, chloroplastic (295 aa).

The N-terminal 29 residues, 1–29, are a transit peptide targeting the chloroplast; that stretch reads MAVSFQTKNPLRPITNIPRSYGPTRVRVT. 3 helical membrane passes run 72–92, 102–122, and 175–195; these read WVAA…IGGF, LACY…HWAI, and LAIN…CILL.

It belongs to the fatty acid desaturase CarF family.

It is found in the plastid. The protein resides in the chloroplast membrane. It functions in the pathway lipid metabolism; fatty acid metabolism. Its function is as follows. Fatty acid desaturase involved in the production of chloroplast-specific phosphatidylglycerol molecular species. Catalyzes the formation of a trans double bond introduced close to the carboxyl group of palmitic acid, which is specifically esterified to the sn-2 glyceryl carbon of phosphatidylglycerol. The polypeptide is Fatty acid desaturase 4-like 1, chloroplastic (FAD4L1) (Arabidopsis thaliana (Mouse-ear cress)).